A 123-amino-acid chain; its full sequence is Small ribosomal subunit protein uS12 (123 aa).

The segment at 1–28 is disordered; that stretch reads MPTIQQLIRTERSKVQKKTKSPALKQCP. A 3-methylthioaspartic acid modification is found at Asp89. The segment at 104 to 123 is disordered; sequence ATGVKDRKQGRSKYGTKRPK. Positions 113-123 are enriched in basic residues; sequence GRSKYGTKRPK.

Belongs to the universal ribosomal protein uS12 family. Part of the 30S ribosomal subunit. Contacts proteins S8 and S17. May interact with IF1 in the 30S initiation complex.

Functionally, with S4 and S5 plays an important role in translational accuracy. Interacts with and stabilizes bases of the 16S rRNA that are involved in tRNA selection in the A site and with the mRNA backbone. Located at the interface of the 30S and 50S subunits, it traverses the body of the 30S subunit contacting proteins on the other side and probably holding the rRNA structure together. The combined cluster of proteins S8, S12 and S17 appears to hold together the shoulder and platform of the 30S subunit. This Gloeothece citriformis (strain PCC 7424) (Cyanothece sp. (strain PCC 7424)) protein is Small ribosomal subunit protein uS12.